Here is a 181-residue protein sequence, read N- to C-terminus: Adenylyl-sulfate kinase (181 aa).

Position 12 to 19 (12 to 19 (GLSGAGKS)) interacts with ATP. Serine 86 (phosphoserine intermediate) is an active-site residue.

This sequence belongs to the APS kinase family.

It carries out the reaction adenosine 5'-phosphosulfate + ATP = 3'-phosphoadenylyl sulfate + ADP + H(+). It participates in sulfur metabolism; hydrogen sulfide biosynthesis; sulfite from sulfate: step 2/3. In terms of biological role, catalyzes the synthesis of activated sulfate. The protein is Adenylyl-sulfate kinase of Microcystis aeruginosa (strain NIES-843 / IAM M-2473).